The following is a 380-amino-acid chain: Septin homolog spn4 (380 aa).

One can recognise a Septin-type G domain in the interval 25–298; sequence NGVAFTLMLC…EQYRQEQMKV (274 aa). Residues 35–42 are G1 motif; it reads GESGLGKT. GTP-binding positions include 35–42, T70, G96, 175–183, G231, and R247; these read GESGLGKT and KADMYTRRD. The G3 motif stretch occupies residues 93–96; that stretch reads DTPG. The interval 174–177 is G4 motif; that stretch reads AKAD.

It belongs to the TRAFAC class TrmE-Era-EngA-EngB-Septin-like GTPase superfamily. Septin GTPase family. Component of the septin complex composed of two copies of each spn1, spn2, spn3 and spn4.

It is found in the cytoplasm. The protein localises to the cell cortex. Its function is as follows. Plays a role in the cell cycle. Involved in a late stage of septum formation leading to the separation of the daughter cells. The sequence is that of Septin homolog spn4 (spn4) from Schizosaccharomyces pombe (strain 972 / ATCC 24843) (Fission yeast).